A 620-amino-acid polypeptide reads, in one-letter code: 1-deoxy-D-xylulose-5-phosphate synthase (620 aa).

Thiamine diphosphate contacts are provided by residues His-80 and Gly-121–Ser-123. Asp-152 serves as a coordination point for Mg(2+). Residues Gly-153–Ala-154, Asn-181, Tyr-288, and Glu-370 contribute to the thiamine diphosphate site. Asn-181 is a binding site for Mg(2+).

It belongs to the transketolase family. DXPS subfamily. As to quaternary structure, homodimer. Requires Mg(2+) as cofactor. The cofactor is thiamine diphosphate.

The catalysed reaction is D-glyceraldehyde 3-phosphate + pyruvate + H(+) = 1-deoxy-D-xylulose 5-phosphate + CO2. It functions in the pathway metabolic intermediate biosynthesis; 1-deoxy-D-xylulose 5-phosphate biosynthesis; 1-deoxy-D-xylulose 5-phosphate from D-glyceraldehyde 3-phosphate and pyruvate: step 1/1. In terms of biological role, catalyzes the acyloin condensation reaction between C atoms 2 and 3 of pyruvate and glyceraldehyde 3-phosphate to yield 1-deoxy-D-xylulose-5-phosphate (DXP). This Escherichia coli O7:K1 (strain IAI39 / ExPEC) protein is 1-deoxy-D-xylulose-5-phosphate synthase.